Consider the following 373-residue polypeptide: Alanine racemase (373 aa).

Catalysis depends on Lys40, which acts as the Proton acceptor; specific for D-alanine. N6-(pyridoxal phosphate)lysine is present on Lys40. Residue Arg140 coordinates substrate. Tyr268 (proton acceptor; specific for L-alanine) is an active-site residue. Met315 is a binding site for substrate.

It belongs to the alanine racemase family. Requires pyridoxal 5'-phosphate as cofactor.

It carries out the reaction L-alanine = D-alanine. Its pathway is amino-acid biosynthesis; D-alanine biosynthesis; D-alanine from L-alanine: step 1/1. In terms of biological role, catalyzes the interconversion of L-alanine and D-alanine. May also act on other amino acids. This Levilactobacillus brevis (strain ATCC 367 / BCRC 12310 / CIP 105137 / JCM 1170 / LMG 11437 / NCIMB 947 / NCTC 947) (Lactobacillus brevis) protein is Alanine racemase (alr).